Consider the following 508-residue polypeptide: Phenylacetaldehyde synthase (508 aa).

L-phenylalanine is bound by residues His-203 and His-318. At Lys-319 the chain carries N6-(pyridoxal phosphate)lysine. Phe-348 serves as a coordination point for L-phenylalanine.

This sequence belongs to the group II decarboxylase family. In terms of assembly, homotetramer. Requires pyridoxal 5'-phosphate as cofactor.

It catalyses the reaction L-phenylalanine + O2 + H2O + H(+) = 2-phenylacetaldehyde + H2O2 + NH4(+) + CO2. Functionally, bifunctional enzyme that catalyzes the decarboxylation of L-phenylalanine to produce 2-phenylethylamine, which is then oxidized to form 2-phenylacetaldehyde, a constituent of floral scent in petals. 2-phenylacetaldehyde is a precursor of 2-phenylethanol, another constituent of floral scent in petals. The chain is Phenylacetaldehyde synthase from Rosa hybrid cultivar.